A 276-amino-acid chain; its full sequence is UPF0276 protein CV_3513 (276 aa).

Belongs to the UPF0276 family.

This Chromobacterium violaceum (strain ATCC 12472 / DSM 30191 / JCM 1249 / CCUG 213 / NBRC 12614 / NCIMB 9131 / NCTC 9757 / MK) protein is UPF0276 protein CV_3513.